The primary structure comprises 80 residues: Exodeoxyribonuclease 7 small subunit (80 aa).

It belongs to the XseB family. As to quaternary structure, heterooligomer composed of large and small subunits.

It is found in the cytoplasm. It catalyses the reaction Exonucleolytic cleavage in either 5'- to 3'- or 3'- to 5'-direction to yield nucleoside 5'-phosphates.. In terms of biological role, bidirectionally degrades single-stranded DNA into large acid-insoluble oligonucleotides, which are then degraded further into small acid-soluble oligonucleotides. The sequence is that of Exodeoxyribonuclease 7 small subunit from Pseudomonas putida (strain W619).